A 541-amino-acid chain; its full sequence is Beta-hexosaminidase 1 (541 aa).

A signal peptide spans 1 to 20 (MSTNLLRLILLFITLSITSS). Residues asparagine 44 and asparagine 304 are each glycosylated (N-linked (GlcNAc...) asparagine). The cysteines at positions 295 and 337 are disulfide-linked. The active-site Proton donor is glutamate 332. Residues asparagine 340, asparagine 352, and asparagine 497 are each glycosylated (N-linked (GlcNAc...) asparagine). Cysteine 511 and cysteine 538 are disulfide-bonded.

The protein belongs to the glycosyl hydrolase 20 family. In terms of processing, N-glycosylated. As to expression, expressed in roots, leaves, stems, flowers and siliques.

It localises to the vacuole. The enzyme catalyses Hydrolysis of terminal non-reducing N-acetyl-D-hexosamine residues in N-acetyl-beta-D-hexosaminides.. Inhibited by N-acetylcastanospermine, 2-acet-amido-1,2-dideoxynojirimycin and PUGNAc. Functionally, has a broad substrate specificity. Can use synthetic substrates such as pyridylaminated chitotriose, pyridylaminated chitobiose, p-nitrophenyl-beta-N-acetylglucosaminide, p-nitrophenyl-2-acetamido-2-deoxy-beta-D-glucopyranoside (pNP-GlcNAc), p-nitrophenyl-2-acetamido-2-deoxy-beta-D-galactopyranoside (pNP-GalNAc), 4-methylumbelliferyl-2-acetamido-2-deoxy-beta-D-glucopyranoside (MU-GlcNAc), and 4-methylumbelliferyl-6-sulfo-2-acetamido-2-deoxy-beta-D-glucopyranoside (MU-GlcNAc-6SO(4)) as substrates. Removes terminal GlcNAc residues from alpha1,3- and alpha1,6-mannosyl branches of biantennary N-glycans without any strict branch preference. Required for the presence of paucimannosidic N-glycans in glycoproteins of roots and, to a lower extent, of leaves. This chain is Beta-hexosaminidase 1 (HEXO1), found in Arabidopsis thaliana (Mouse-ear cress).